The following is a 454-amino-acid chain: NADP-specific glutamate dehydrogenase 1 (454 aa).

Serine 2 bears the N-acetylserine mark. Lysine 110 is an active-site residue. Glycine 174–alanine 203 lines the NAD(+) pocket. Glycyl lysine isopeptide (Lys-Gly) (interchain with G-Cter in ubiquitin) cross-links involve residues lysine 325, lysine 371, and lysine 433.

Belongs to the Glu/Leu/Phe/Val dehydrogenases family. As to quaternary structure, homohexamer.

The catalysed reaction is L-glutamate + NADP(+) + H2O = 2-oxoglutarate + NH4(+) + NADPH + H(+). In terms of biological role, catalyzes the incorporation of an ammonium ion into alpha-ketoglutarate to form L-glutamate, the major route of assimilation of ammonia into an organic form in yeast. The chain is NADP-specific glutamate dehydrogenase 1 from Saccharomyces cerevisiae (strain ATCC 204508 / S288c) (Baker's yeast).